The chain runs to 169 residues: Peptide methionine sulfoxide reductase MsrA (169 aa).

C13 is an active-site residue.

This sequence belongs to the MsrA Met sulfoxide reductase family.

It carries out the reaction L-methionyl-[protein] + [thioredoxin]-disulfide + H2O = L-methionyl-(S)-S-oxide-[protein] + [thioredoxin]-dithiol. It catalyses the reaction [thioredoxin]-disulfide + L-methionine + H2O = L-methionine (S)-S-oxide + [thioredoxin]-dithiol. Its function is as follows. Has an important function as a repair enzyme for proteins that have been inactivated by oxidation. Catalyzes the reversible oxidation-reduction of methionine sulfoxide in proteins to methionine. The chain is Peptide methionine sulfoxide reductase MsrA from Mycolicibacterium vanbaalenii (strain DSM 7251 / JCM 13017 / BCRC 16820 / KCTC 9966 / NRRL B-24157 / PYR-1) (Mycobacterium vanbaalenii).